The chain runs to 777 residues: ATPase ARSA1 (777 aa).

Residue 110-117 (KGGVGKTS) coordinates ATP. Residue D139 is part of the active site. Residues N372 and 454-461 (KGGVGKTS) each bind ATP. The active site involves D483. An ATP-binding site is contributed by N712.

The protein belongs to the arsA ATPase family. In terms of assembly, monomer. Interacts with TOC34.

The protein resides in the cytoplasm. It localises to the cytosol. Functionally, ATPase required for the post-translational delivery of tail-anchored (TA) proteins to the chloroplast. Required for the accumulation of TOC34, an essential component of the outer chloroplast membrane translocon (TOC) complex. Recognizes and selectively binds the transmembrane domain of TA proteins in the cytosol. This complex then targets to chloroplast, where the tail-anchored protein is released for insertion. This process is regulated by ATP binding and hydrolysis. This is ATPase ARSA1 from Chlamydomonas reinhardtii (Chlamydomonas smithii).